We begin with the raw amino-acid sequence, 194 residues long: 5'-deoxynucleotidase VV1113 (194 aa).

Substrate contacts are provided by residues 18 to 19 (RW) and histidine 33. The HD domain occupies 30–142 (VSEHSLQVAF…VKQADSICAY (113 aa)). A divalent metal cation-binding residues include histidine 33, histidine 68, and aspartate 69. Residues aspartate 69, 77–80 (DLPT), and aspartate 137 contribute to the substrate site. Residue aspartate 137 coordinates a divalent metal cation.

Belongs to the 5DNU family. Homodimer. Requires a divalent metal cation as cofactor.

The protein resides in the cytoplasm. It carries out the reaction a 2'-deoxyribonucleoside 5'-phosphate + H2O = a 2'-deoxyribonucleoside + phosphate. Its function is as follows. Catalyzes the strictly specific dephosphorylation of 2'-deoxyribonucleoside 5'-monophosphates. This is 5'-deoxynucleotidase VV1113 from Vibrio vulnificus (strain YJ016).